Reading from the N-terminus, the 148-residue chain is Ubiquitin-conjugating enzyme E2 10 (148 aa).

In terms of domain architecture, UBC core spans 1 to 147 (MASKRILKEL…ARSWTQKYAM (147 aa)). Cys85 (glycyl thioester intermediate) is an active-site residue.

Belongs to the ubiquitin-conjugating enzyme family. As to quaternary structure, interacts with CHIP and the E3 ubiquitin ligase BB. Associates with the E3 ubiquitin ligase JMJ24. In terms of tissue distribution, ubiquitously expressed with the highest levels in rosette leaves, roots and petals.

It carries out the reaction S-ubiquitinyl-[E1 ubiquitin-activating enzyme]-L-cysteine + [E2 ubiquitin-conjugating enzyme]-L-cysteine = [E1 ubiquitin-activating enzyme]-L-cysteine + S-ubiquitinyl-[E2 ubiquitin-conjugating enzyme]-L-cysteine.. It participates in protein modification; protein ubiquitination. Accepts the ubiquitin from the E1 complex and catalyzes its covalent attachment to other proteins. Mediates the selective degradation of short-lived and abnormal proteins. The polypeptide is Ubiquitin-conjugating enzyme E2 10 (Arabidopsis thaliana (Mouse-ear cress)).